Here is a 450-residue protein sequence, read N- to C-terminus: Interferon-related developmental regulator 1 (450 aa).

A compositionally biased stretch (basic residues) spans 1 to 10 (MPKNKKRNTP). The disordered stretch occupies residues 1–46 (MPKNKKRNTPHRGGSGGGGSGAAATTAATAGGQHRNVQPFSDEDAS). The segment covering 22–32 (AAATTAATAGG) has biased composition (low complexity).

Belongs to the IFRD family. In terms of assembly, interacts with PSIP1/LEDGF.

In terms of biological role, could play a role in regulating gene activity in the proliferative and/or differentiative pathways induced by NGF. May be an autocrine factor that attenuates or amplifies the initial ligand-induced signal. The sequence is that of Interferon-related developmental regulator 1 (IFRD1) from Sus scrofa (Pig).